The primary structure comprises 132 residues: D-ribose pyranase (132 aa).

Catalysis depends on histidine 20, which acts as the Proton donor. Substrate-binding positions include aspartate 28, histidine 99, and 121–123 (YSN).

It belongs to the RbsD / FucU family. RbsD subfamily. As to quaternary structure, homodecamer.

It localises to the cytoplasm. It catalyses the reaction beta-D-ribopyranose = beta-D-ribofuranose. It functions in the pathway carbohydrate metabolism; D-ribose degradation; D-ribose 5-phosphate from beta-D-ribopyranose: step 1/2. Functionally, catalyzes the interconversion of beta-pyran and beta-furan forms of D-ribose. This is D-ribose pyranase from Streptococcus agalactiae serotype V (strain ATCC BAA-611 / 2603 V/R).